Here is a 113-residue protein sequence, read N- to C-terminus: Ig heavy chain V-III region ABE-47N (113 aa).

The region spanning 1-113 (EVKLEESGGG…YWGQGTLVTV (113 aa)) is the Ig-like domain. Cysteine 22 and cysteine 98 are joined by a disulfide.

In Mus musculus (Mouse), this protein is Ig heavy chain V-III region ABE-47N.